The chain runs to 567 residues: Pyruvate decarboxylase (567 aa).

Residues D28 and H117 each contribute to the pyruvate site. Thiamine diphosphate contacts are provided by residues T393 and 416 to 418 (GSI). Residue D447 coordinates Mg(2+). Thiamine diphosphate contacts are provided by residues 448 to 449 (GS) and 475 to 480 (NDGYTI). Residues N475 and G477 each contribute to the Mg(2+) site. E481 is a binding site for pyruvate.

The protein belongs to the TPP enzyme family. As to quaternary structure, homotetramer. Requires Mg(2+) as cofactor. The cofactor is thiamine diphosphate.

The protein localises to the cytoplasm. The enzyme catalyses a 2-oxocarboxylate + H(+) = an aldehyde + CO2. It carries out the reaction pyruvate + H(+) = acetaldehyde + CO2. The sequence is that of Pyruvate decarboxylase (PDC11) from Candida albicans (strain SC5314 / ATCC MYA-2876) (Yeast).